A 92-amino-acid polypeptide reads, in one-letter code: MLCAVYKSSRKADTYLFVNKRDCFDDVPQALLDMFGVPQLVMVFPIVKRESLGIADINKVRAALEEKGFYLQIPPPQVNLLAEHRENLGIKD.

The YcgL domain maps to 1–85 (MLCAVYKSSR…PQVNLLAEHR (85 aa)).

The chain is YcgL domain-containing protein SO_2575 from Shewanella oneidensis (strain ATCC 700550 / JCM 31522 / CIP 106686 / LMG 19005 / NCIMB 14063 / MR-1).